The sequence spans 378 residues: Acetylornithine deacetylase (378 aa).

His76 lines the Zn(2+) pocket. Residue Asp78 is part of the active site. Zn(2+) is bound at residue Asp108. Glu140 is an active-site residue. Positions 141, 165, and 351 each coordinate Zn(2+).

This sequence belongs to the peptidase M20A family. ArgE subfamily. As to quaternary structure, homodimer. The cofactor is Zn(2+). Co(2+) serves as cofactor. Glutathione is required as a cofactor.

Its subcellular location is the cytoplasm. It catalyses the reaction N(2)-acetyl-L-ornithine + H2O = L-ornithine + acetate. The protein operates within amino-acid biosynthesis; L-arginine biosynthesis; L-ornithine from N(2)-acetyl-L-ornithine (linear): step 1/1. Its function is as follows. Catalyzes the hydrolysis of the amide bond of N(2)-acetylated L-amino acids. Cleaves the acetyl group from N-acetyl-L-ornithine to form L-ornithine, an intermediate in L-arginine biosynthesis pathway, and a branchpoint in the synthesis of polyamines. The chain is Acetylornithine deacetylase from Aliivibrio salmonicida (strain LFI1238) (Vibrio salmonicida (strain LFI1238)).